Here is a 348-residue protein sequence, read N- to C-terminus: Phosphate acyltransferase (348 aa).

It belongs to the PlsX family. In terms of assembly, homodimer. Probably interacts with PlsY.

Its subcellular location is the cytoplasm. The catalysed reaction is a fatty acyl-[ACP] + phosphate = an acyl phosphate + holo-[ACP]. It functions in the pathway lipid metabolism; phospholipid metabolism. Catalyzes the reversible formation of acyl-phosphate (acyl-PO(4)) from acyl-[acyl-carrier-protein] (acyl-ACP). This enzyme utilizes acyl-ACP as fatty acyl donor, but not acyl-CoA. This chain is Phosphate acyltransferase, found in Synechocystis sp. (strain ATCC 27184 / PCC 6803 / Kazusa).